The chain runs to 738 residues: uncharacterized protein (738 aa).

Positions 1–27 (MKKLLTSLMLSTASFMLLLTVSNKAYA) are cleaved as a signal peptide. 2 helical membrane passes run 612–632 (TFHT…ILNS) and 712–732 (ITYA…TVTI).

It localises to the membrane. This is an uncharacterized protein from Mycoplasma (Bacteriophage L2).